The primary structure comprises 543 residues: MKKFLKYLAVFLVVLLIAAIAFLFRPIASKKIQTSANEPVVDVVLVGGGIMSATLGTYLTELEPNWQIRMYERLDRVAQESSNGFNNAGTGHSGFMEMNYTEEKDGKMDISKAVKVAEQFEISKQFWAYQVKHNVLGQPSSFINPVPHHAFVWGDNVAFLEKRYAAMIKNPLFYGMQFTENANQIKQWAPLTMEGRDPAQKVAATRMEIGSDVNYGAITTQLVNNLDKHQNFKLSTSSEVTGISQNDDKTWTVAFKNLKTGKADHVKTRFVFIGAGGASVKLLQMTGLPESKQYAGFPVGGVFLMTDNPKIAAEHTAKLYGRAELGAPPMSVPHIDTRYIDGKKYVLFGPFATYSNKFLKQGSQFDLLASTNKNNVLPMTAVGMENLDLVKYLVSQVMMTDEDRFNELKKYYPNAKREDWRLNQGGQRVQVIKKEEGKPAKLQFGTEVFVSKDRSVTALMGASPGASTSPYIMLNLLEKAFPQQVKGEWNPKLHEIVRSYKQDLSDNPVLLDQVRQYTSQTLGLHYTPLTQADFAKIAASQSK.

Belongs to the MQO family. FAD serves as cofactor.

It catalyses the reaction (S)-malate + a quinone = a quinol + oxaloacetate. The protein operates within carbohydrate metabolism; tricarboxylic acid cycle; oxaloacetate from (S)-malate (quinone route): step 1/1. This is Probable malate:quinone oxidoreductase from Acinetobacter baylyi (strain ATCC 33305 / BD413 / ADP1).